Reading from the N-terminus, the 465-residue chain is G1/S-specific cyclin CLN2 (465 aa).

Belongs to the cyclin family.

Functionally, essential for the control of the cell cycle at the G1/S (start) transition. Interacts with the CDC28 protein kinase to form MPF. The chain is G1/S-specific cyclin CLN2 (CLN2) from Candida albicans (Yeast).